The primary structure comprises 70 residues: Large ribosomal subunit protein eL38 (70 aa).

Belongs to the eukaryotic ribosomal protein eL38 family.

The chain is Large ribosomal subunit protein eL38 (RpL38) from Timarcha balearica.